The chain runs to 122 residues: UPF0231 protein VP2494 (122 aa).

The protein belongs to the UPF0231 family.

In Vibrio parahaemolyticus serotype O3:K6 (strain RIMD 2210633), this protein is UPF0231 protein VP2494.